The sequence spans 2766 residues: PDZ domain-containing protein 2 (2766 aa).

The PDZ 1 domain occupies 85 to 177 (LSFGNIPVFG…GGFIYLIMLR (93 aa)). 2 disordered regions span residues 189–315 (GNSG…KTGK) and 419–452 (MPGS…KLKS). The segment covering 242–254 (TADDPNSELENGA) has biased composition (acidic residues). The span at 280–296 (HLERSEADSEVELRVPK) shows a compositional bias: basic and acidic residues. The PDZ 2 domain maps to 334-419 (KMELLKESDG…MVQLVVASKM (86 aa)). S517 is modified (phosphoserine). The region spanning 535-621 (IIGLYKEKGK…GLFVLTVRTK (87 aa)) is the PDZ 3 domain. The segment covering 627 to 636 (LTPCSTPTHM) has biased composition (polar residues). The segment at 627 to 673 (LTPCSTPTHMSRSSSPSFNTNSGGTPAGGGQEEGGSSSLGRKAPGPK) is disordered. The span at 637–650 (SRSSSPSFNTNSGG) shows a compositional bias: low complexity. The 86-residue stretch at 679 to 764 (EVTLNKEPRV…GPVRLVIGRH (86 aa)) folds into the PDZ 4 domain. Over residues 783–794 (YQESREANSSPG) the composition is skewed to polar residues. Disordered regions lie at residues 783–803 (YQES…KSPS) and 834–853 (AGSE…EDGS). Phosphoserine is present on residues S891 and S895. Disordered regions lie at residues 915–966 (NGGS…KQEE), 990–1425 (HSIL…PSVL), 1456–1531 (ISLS…CPGT), 1725–1909 (DSQG…LPEQ), 1924–1967 (DTSC…IRQS), 2015–2070 (ERVP…ASQV), 2146–2174 (FSSH…AMGG), 2262–2397 (DRPT…ERRT), 2424–2450 (QLEI…GHAD), and 2465–2496 (TRAY…WATP). The span at 918–927 (SDDEDFDGEG) shows a compositional bias: acidic residues. A compositionally biased stretch (basic and acidic residues) spans 1021-1038 (GRKEMSGSRSSPKLEYRV). Polar residues-rich tracts occupy residues 1040-1061 (TDTQ…SENL), 1126-1137 (PGDSSVPTNCGP), and 1189-1220 (SETP…SQGI). Low complexity-rich tracts occupy residues 1379–1393 (SQPP…SHHA) and 1456–1471 (ISLS…SPSS). Position 1767 is a phosphoserine (S1767). The span at 1797-1806 (CSPKLKRLNS) shows a compositional bias: basic residues. A compositionally biased stretch (polar residues) spans 1884–1901 (LRTSASDTSIRTFTSPLT). Low complexity-rich tracts occupy residues 1924-1937 (DTSC…PRSG) and 1947-1963 (SGSA…ALAG). Composition is skewed to low complexity over residues 2280-2296 (PPIN…GSPS) and 2305-2321 (RSLS…SSLL). Polar residues-rich tracts occupy residues 2322–2347 (PQMT…SNKG) and 2362–2372 (PTSTVSPASPS). The 85-residue stretch at 2550–2634 (FIVLNKKEGS…HKHALMIIKK (85 aa)) folds into the PDZ 5 domain. Residues 2635 to 2667 (GNDQPGPSFKQEPPSANGKGPFPRRTLPLEPGA) form a disordered region. The PDZ 6 domain occupies 2678–2763 (CVEVLKTSAG…GPVQLVIRKH (86 aa)).

Interacts with SCN10A, CTNND2 and PKP4. In terms of processing, a secreted form is produced by caspase-mediated proteolytic cleavage. As to expression, expressed in the heart, liver, brain, spleen, lung, kidney, testis and skeletal muscle.

The protein resides in the nucleus. The protein localises to the cytoplasm. It is found in the endoplasmic reticulum. Its subcellular location is the cell junction. It localises to the secreted. The sequence is that of PDZ domain-containing protein 2 (Pdzd2) from Rattus norvegicus (Rat).